The chain runs to 96 residues: Large ribosomal subunit protein eL14 (96 aa).

This sequence belongs to the eukaryotic ribosomal protein eL14 family.

This Saccharolobus islandicus (strain Y.N.15.51 / Yellowstone #2) (Sulfolobus islandicus) protein is Large ribosomal subunit protein eL14.